The primary structure comprises 112 residues: Large ribosomal subunit protein uL24 (112 aa).

Positions 92–112 are disordered; it reads ERDGKQKTVRVRVSKSTGKDL.

The protein belongs to the universal ribosomal protein uL24 family. As to quaternary structure, part of the 50S ribosomal subunit.

Functionally, one of two assembly initiator proteins, it binds directly to the 5'-end of the 23S rRNA, where it nucleates assembly of the 50S subunit. One of the proteins that surrounds the polypeptide exit tunnel on the outside of the subunit. This Kocuria rhizophila (strain ATCC 9341 / DSM 348 / NBRC 103217 / DC2201) protein is Large ribosomal subunit protein uL24.